The primary structure comprises 35 residues: Cupiennin-2d (35 aa).

Position 35 is a glutamine amide (Q35).

As to expression, expressed by the venom gland.

It localises to the secreted. The chain is Cupiennin-2d from Cupiennius salei (American wandering spider).